We begin with the raw amino-acid sequence, 340 residues long: MSSAAVVHHDDLMEPTLQSIINQKTLRWIFVGGKGGVGKTTTSCSLAIQLAKARKSVLLISTDPAHNLSDAFGQKFGKEARLVDGYSNLSAMEIDPNGSIQDLLASGEAQGEDPMAGLGMGNMMQDLAFSIPGVDEAMSFAEVLKQVKSLSYEVIVFDTAPTGHTLRFLQFPTVLEKALAKLSQLSSQFGPMLNSILGARGGLPGGQNIDELLQKMESLRETISEVNTQFKNPDMTTFVCVCIAEFLSLYETERMIQELTSYSIDTHAIVVNQLLFPKKGSECEQCNARRKMQQKYLEQIEELYEDFNVVRMPLLVEEVRGKEKLEKFSEMLVHPYVPPQ.

34 to 41 (KGGVGKTT) is a binding site for ATP. The active site involves Asp63. ATP contacts are provided by Glu245 and Asn272. Residues Cys283 and Cys286 each coordinate Zn(2+).

This sequence belongs to the arsA ATPase family. As to quaternary structure, homodimer.

The protein resides in the cytoplasm. It is found in the endoplasmic reticulum. Its function is as follows. ATPase required for the post-translational delivery of tail-anchored (TA) proteins to the endoplasmic reticulum. Recognizes and selectively binds the transmembrane domain of TA proteins in the cytosol. This complex then targets to the endoplasmic reticulum by membrane-bound receptors, where the tail-anchored protein is released for insertion. This process is regulated by ATP binding and hydrolysis. ATP binding drives the homodimer towards the closed dimer state, facilitating recognition of newly synthesized TA membrane proteins. ATP hydrolysis is required for insertion. Subsequently, the homodimer reverts towards the open dimer state, lowering its affinity for the membrane-bound receptor, and returning it to the cytosol to initiate a new round of targeting. The sequence is that of ATPase get3 (get3) from Aspergillus clavatus (strain ATCC 1007 / CBS 513.65 / DSM 816 / NCTC 3887 / NRRL 1 / QM 1276 / 107).